Consider the following 520-residue polypeptide: ATP synthase subunit alpha (520 aa).

Residue 169–176 coordinates ATP; sequence GDRKTGKT.

It belongs to the ATPase alpha/beta chains family. As to quaternary structure, F-type ATPases have 2 components, CF(1) - the catalytic core - and CF(0) - the membrane proton channel. CF(1) has five subunits: alpha(3), beta(3), gamma(1), delta(1), epsilon(1). CF(0) has three main subunits: a(1), b(2) and c(9-12). The alpha and beta chains form an alternating ring which encloses part of the gamma chain. CF(1) is attached to CF(0) by a central stalk formed by the gamma and epsilon chains, while a peripheral stalk is formed by the delta and b chains.

Its subcellular location is the cell membrane. It carries out the reaction ATP + H2O + 4 H(+)(in) = ADP + phosphate + 5 H(+)(out). Functionally, produces ATP from ADP in the presence of a proton gradient across the membrane. The alpha chain is a regulatory subunit. The protein is ATP synthase subunit alpha of Oenococcus oeni (strain ATCC BAA-331 / PSU-1).